Consider the following 1903-residue polypeptide: Plexin-A4 (1903 aa).

Residues 1–26 (MAFHNRRWNFTFSCCVVVLLLPLVAA) form the signal peptide. The region spanning 27 to 515 (RPQQPSAATR…SESQLTRVPV (489 aa)) is the Sema domain. Residues 27 to 1246 (RPQQPSAATR…ITSDSPLSST (1220 aa)) lie on the Extracellular side of the membrane. Cystine bridges form between Cys97–Cys106 and Cys132–Cys140. Asn166 carries N-linked (GlcNAc...) asparagine glycosylation. 3 cysteine pairs are disulfide-bonded: Cys291/Cys413, Cys307/Cys364, and Cys382/Cys401. Asn450 carries N-linked (GlcNAc...) asparagine glycosylation. The PSI 1 domain maps to 517-567 (ACEQYSSCNECLGSGDPHCGWCVLHSMCTRKEKCERSSEPRRFASNIKQCV). Disulfide bonds link Cys518–Cys535, Cys524–Cys566, Cys527–Cys544, and Cys538–Cys550. N-linked (GlcNAc...) asparagine glycosylation is found at Asn575 and Asn600. Cys601 and Cys620 are disulfide-bonded. N-linked (GlcNAc...) asparagine glycans are attached at residues Asn656, Asn663, Asn764, and Asn772. Residues 663–710 (NCSVHKSCLSCVGSPYQCHWCKYRHTCTHDPSSCSFQEGRVKQPEECP) enclose the PSI 2 domain. A PSI 3 domain is found at 811–864 (KCDARRESCGLCLKADPLFGCVWCKGENRCSLKQHCSYPQSMWLEHNGINSKCT). 4 IPT/TIG domains span residues 866 to 960 (PRIT…YYFV), 962 to 1046 (PQLL…FEYV), 1049 to 1148 (PTIT…FVYY), and 1151 to 1246 (PVFE…LSST). Asn981, Asn992, Asn1025, Asn1141, Asn1189, and Asn1214 each carry an N-linked (GlcNAc...) asparagine glycan. A helical transmembrane segment spans residues 1247–1267 (AVISIAGAGGLLIFFIVIVLI). At 1268-1903 (AYKRKSRESD…QVVAFMSLES (636 aa)) the chain is on the cytoplasmic side.

The protein belongs to the plexin family.

It localises to the cell membrane. Involved in the development of primary sensory neurons especially in branching of the peripheral axons. Interacts with the SLIT2 signaling specifically to promote axonal branching of Rohon-Beard neurons and the trigeminal sensory ganglion neurons. In Danio rerio (Zebrafish), this protein is Plexin-A4 (plxna4).